The following is a 638-amino-acid chain: Plasma kallikrein (638 aa).

Positions 1–19 (MILFNRVGYFVSLFATVSC) are cleaved as a signal peptide. Apple domains follow at residues 21–104 (CMTQ…LKQC), 111–194 (CHRD…LKSC), 201–284 (CPMD…LLTC), and 292–375 (CHSK…LRLC). Disulfide bonds link Cys-21–Cys-104, Cys-47–Cys-77, Cys-51–Cys-57, Cys-111–Cys-194, Cys-137–Cys-166, Cys-141–Cys-147, Cys-201–Cys-284, Cys-227–Cys-256, Cys-231–Cys-237, Cys-292–Cys-375, Cys-318–Cys-347, Cys-322–Cys-328, Cys-340–Cys-345, Cys-383–Cys-503, Cys-419–Cys-435, Cys-517–Cys-584, Cys-548–Cys-563, and Cys-574–Cys-602. Asn-127 carries N-linked (GlcNAc...) asparagine glycosylation. The N-linked (GlcNAc...) asparagine glycan is linked to Asn-215. Asn-308 carries an N-linked (GlcNAc...) asparagine glycan. In terms of domain architecture, Peptidase S1 spans 391–626 (IVGGTNASLG…YMDWILEKTQ (236 aa)). N-linked (GlcNAc...) asparagine glycosylation is present at Asn-396. Catalysis depends on charge relay system residues His-434 and Asp-483. N-linked (GlcNAc...) asparagine glycosylation is present at Asn-494. Catalysis depends on Ser-578, which acts as the Charge relay system.

The protein belongs to the peptidase S1 family. Plasma kallikrein subfamily. As to quaternary structure, forms a heterodimer with SERPINA5. The zymogen is activated by factor XIIa, which cleaves the molecule into a light chain, which contains the active site, and a heavy chain, which associates with HMW kininogen. These chains are linked by one or more disulfide bonds.

The protein resides in the secreted. The enzyme catalyses Cleaves selectively Arg-|-Xaa and Lys-|-Xaa bonds, including Lys-|-Arg and Arg-|-Ser bonds in (human) kininogen to release bradykinin.. With respect to regulation, inhibited by SERPINA5. Its function is as follows. The enzyme cleaves Lys-Arg and Arg-Ser bonds. It activates, in a reciprocal reaction, factor XII after its binding to a negatively charged surface. It also releases bradykinin from HMW kininogen and may also play a role in the renin-angiotensin system by converting prorenin into renin. The chain is Plasma kallikrein (Klkb1) from Mus musculus (Mouse).